A 341-amino-acid polypeptide reads, in one-letter code: tRNA N6-adenosine threonylcarbamoyltransferase (341 aa).

Fe cation-binding residues include His111 and His115. Substrate contacts are provided by residues 134 to 138, Asp167, Gly180, and Asn276; that span reads LVSGG. Asp304 contacts Fe cation.

The protein belongs to the KAE1 / TsaD family. The cofactor is Fe(2+).

Its subcellular location is the cytoplasm. It catalyses the reaction L-threonylcarbamoyladenylate + adenosine(37) in tRNA = N(6)-L-threonylcarbamoyladenosine(37) in tRNA + AMP + H(+). Its function is as follows. Required for the formation of a threonylcarbamoyl group on adenosine at position 37 (t(6)A37) in tRNAs that read codons beginning with adenine. Is involved in the transfer of the threonylcarbamoyl moiety of threonylcarbamoyl-AMP (TC-AMP) to the N6 group of A37, together with TsaE and TsaB. TsaD likely plays a direct catalytic role in this reaction. In Pseudomonas entomophila (strain L48), this protein is tRNA N6-adenosine threonylcarbamoyltransferase.